The chain runs to 453 residues: Gamma-aminobutyric acid receptor subunit alpha-6 (453 aa).

Positions 1–19 (MVLLLPWLFIILWLENAQA) are cleaved as a signal peptide. Topologically, residues 20 to 243 (QLEDEGNFYS…FHLQRKMGYF (224 aa)) are extracellular. Asparagine 31 carries an N-linked (GlcNAc...) asparagine glycan. Arginine 84 provides a ligand contact to 4-aminobutanoate. N-linked (GlcNAc...) asparagine glycosylation is found at asparagine 128 and asparagine 141. Threonine 147 is a 4-aminobutanoate binding site. Cysteines 156 and 170 form a disulfide. Residues 244-264 (MIQIYTPCIMTVILSQVSFWI) traverse the membrane as a helical segment. The Cytoplasmic portion of the chain corresponds to 265–270 (NKESVP). A helical membrane pass occupies residues 271 to 290 (ARTVFGITTVLTMTTLSISA). Residues 291–304 (RHSLPKVSYATAMD) are Extracellular-facing. The chain crosses the membrane as a helical span at residues 305 to 325 (WFIAVCFAFVFSALIEFAAVN). Topologically, residues 326–422 (YFTNLQSQKA…GTSKIDQYSR (97 aa)) are cytoplasmic. Residue serine 375 is modified to Phosphoserine. A helical membrane pass occupies residues 423 to 443 (ILFPVAFAGFNLVYWIVYLSK). Residues 444–453 (DTMEVSSTVE) are Extracellular-facing.

Belongs to the ligand-gated ion channel (TC 1.A.9) family. Gamma-aminobutyric acid receptor (TC 1.A.9.5) subfamily. GABRA6 sub-subfamily. As to quaternary structure, heteropentamer, formed by a combination of alpha (GABRA1-6), beta (GABRB1-3), gamma (GABRG1-3), delta (GABRD), epsilon (GABRE), rho (GABRR1-3), pi (GABRP) and theta (GABRQ) chains, each subunit exhibiting distinct physiological and pharmacological properties. Binds UBQLN1. As to expression, expressed in brain, in cerebellar granule cells.

It is found in the postsynaptic cell membrane. It localises to the cell membrane. The enzyme catalyses chloride(in) = chloride(out). Alpha subunit of the heteropentameric ligand-gated chloride channel gated by gamma-aminobutyric acid (GABA), a major inhibitory neurotransmitter in the brain. GABA-gated chloride channels, also named GABA(A) receptors (GABAAR), consist of five subunits arranged around a central pore and contain GABA active binding site(s) located at the alpha and beta subunit interface(s). When activated by GABA, GABAARs selectively allow the flow of chloride anions across the cell membrane down their electrochemical gradient. Alpha-6/GABRA6 subunits are found at both synaptic and extrasynaptic sites. Chloride influx into the postsynaptic neuron following GABAAR opening decreases the neuron ability to generate a new action potential, thereby reducing nerve transmission. Extrasynaptic alpha-6-containing receptors contribute to the tonic GABAergic inhibition. Alpha-6 subunits are also present on glutamatergic synapses. In Mus musculus (Mouse), this protein is Gamma-aminobutyric acid receptor subunit alpha-6.